We begin with the raw amino-acid sequence, 122 residues long: Large ribosomal subunit protein uL14 (122 aa).

The protein belongs to the universal ribosomal protein uL14 family. As to quaternary structure, part of the 50S ribosomal subunit. Forms a cluster with proteins L3 and L19. In the 70S ribosome, L14 and L19 interact and together make contacts with the 16S rRNA in bridges B5 and B8.

Its function is as follows. Binds to 23S rRNA. Forms part of two intersubunit bridges in the 70S ribosome. The chain is Large ribosomal subunit protein uL14 from Acinetobacter baumannii (strain AB307-0294).